The primary structure comprises 118 residues: UPF0102 protein Sde_3146 (118 aa).

It belongs to the UPF0102 family.

The polypeptide is UPF0102 protein Sde_3146 (Saccharophagus degradans (strain 2-40 / ATCC 43961 / DSM 17024)).